The following is a 152-amino-acid chain: Small ribosomal subunit protein uS19 (152 aa).

It belongs to the universal ribosomal protein uS19 family.

This Podospora anserina (Pleurage anserina) protein is Small ribosomal subunit protein uS19 (RPS15).